The primary structure comprises 278 residues: Large ribosomal subunit protein uL2 (278 aa).

Basic residues-rich tracts occupy residues 210–219 and 252–263; these read RSRWLGKRPQ and KKSRGIKTRNSK. The disordered stretch occupies residues 210 to 278; it reads RSRWLGKRPQ…LIIRHRKGNK (69 aa).

It belongs to the universal ribosomal protein uL2 family. Part of the 50S ribosomal subunit. Forms a bridge to the 30S subunit in the 70S ribosome.

Its function is as follows. One of the primary rRNA binding proteins. Required for association of the 30S and 50S subunits to form the 70S ribosome, for tRNA binding and peptide bond formation. It has been suggested to have peptidyltransferase activity; this is somewhat controversial. Makes several contacts with the 16S rRNA in the 70S ribosome. This Lactobacillus johnsonii (strain CNCM I-12250 / La1 / NCC 533) protein is Large ribosomal subunit protein uL2.